Consider the following 203-residue polypeptide: Casparian strip membrane protein 1 (203 aa).

At alanine 2 the chain carries N-acetylalanine. The Cytoplasmic portion of the chain corresponds to 2–40 (AKESTTIDVGEPSTVTKSSSHVVKKKGFVAAAAGGGAKR). The helical transmembrane segment at 41–61 (GLAIFDFLLRLAAIGVTIGAA) threads the bilayer. Topologically, residues 62–92 (SVMYTAQETLPFFTQFLQFQAGYDDLPAFQY) are extracellular. Residues 93 to 113 (FVIAVAIVASYLVLSLPFSIV) traverse the membrane as a helical segment. The Cytoplasmic portion of the chain corresponds to 114-124 (TIVRPLAVAPR). The helical transmembrane segment at 125 to 145 (LILLIFDTLVVTLNTSAAAAA) threads the bilayer. Residues 146 to 177 (ASIVYLAHNGNQSTNWLPICQQFGDFCQNVST) lie on the Extracellular side of the membrane. Asparagine 156 and asparagine 174 each carry an N-linked (GlcNAc...) asparagine glycan. A helical transmembrane segment spans residues 178–198 (AVVAASIAILFFIVLIIISAI). Residues 199–203 (ALKRH) are Cytoplasmic-facing.

The protein belongs to the Casparian strip membrane proteins (CASP) family. Homodimer and heterodimers.

It is found in the cell membrane. Its function is as follows. Regulates membrane-cell wall junctions and localized cell wall deposition. Required for establishment of the Casparian strip membrane domain (CSD) and the subsequent formation of Casparian strips, a cell wall modification of the root endodermis that determines an apoplastic barrier between the intraorganismal apoplasm and the extraorganismal apoplasm and prevents lateral diffusion. The chain is Casparian strip membrane protein 1 from Arabidopsis lyrata subsp. lyrata (Lyre-leaved rock-cress).